Here is a 375-residue protein sequence, read N- to C-terminus: MKVKVLSLLVPALLVAGAANAAEVYNKDGNKLDLYGKVDGLHYFSDDKSVDGDQTYMRLGFKGETQVTDQLTGYGQWEYQIQGNAPESENNSWTRVAFAGLKFQDIGSFDYGRNYGVVYDVTSWTDVLPEFGGDTYGSDNFMQQRGNGFATYRNTDFFGLVDGLNFAVQYQGQNGSVSGENDPDFTGHGITNNGRKALRQNGDGVGGSITYDYEGFGVGAAVSSSKRTDAQNTAAYIGNGDRAETYTGGLKYDANNIYLAAQYTQTYNATRVGSLGWANKAQNFEAVAQYQFDFGLRPSVAYLQSKGKNLGTIGTRNYDDEDILKYVDVGATYYFNKNMSTYVDYKINLLDDNQFTRDAGINTDNIVALGLVYQF.

A signal peptide spans 1-21; it reads MKVKVLSLLVPALLVAGAANA. The Periplasmic segment spans residues 22 to 33; sequence AEVYNKDGNKLD. A beta stranded membrane pass occupies residues 34–42; it reads LYGKVDGLH. Residues 43–53 lie on the Extracellular side of the membrane; that stretch reads YFSDDKSVDGD. Residues 54 to 63 form a beta stranded membrane-spanning segment; it reads QTYMRLGFKG. At 64-73 the chain is on the periplasmic side; the sequence is ETQVTDQLTG. A beta stranded membrane pass occupies residues 74-84; the sequence is YGQWEYQIQGN. Residues 85–91 lie on the Extracellular side of the membrane; it reads APESENN. The chain crosses the membrane as a beta stranded span at residues 92–101; the sequence is SWTRVAFAGL. The Periplasmic portion of the chain corresponds to 102 to 106; it reads KFQDI. The beta stranded transmembrane segment at 107–115 threads the bilayer; that stretch reads GSFDYGRNY. At 116 to 141 the chain is on the extracellular side; the sequence is GVVYDVTSWTDVLPEFGGDTYGSDNF. Residues 142 to 154 traverse the membrane as a beta stranded segment; sequence MQQRGNGFATYRN. Residues 155–163 lie on the Periplasmic side of the membrane; the sequence is TDFFGLVDG. A beta stranded transmembrane segment spans residues 164–171; that stretch reads LNFAVQYQ. The Extracellular segment spans residues 172 to 204; that stretch reads GQNGSVSGENDPDFTGHGITNNGRKALRQNGDG. A beta stranded transmembrane segment spans residues 205 to 211; the sequence is VGGSITY. Residues 212–215 lie on the Periplasmic side of the membrane; it reads DYEG. Residues 216-223 form a beta stranded membrane-spanning segment; it reads FGVGAAVS. The Extracellular segment spans residues 224-245; sequence SSKRTDAQNTAAYIGNGDRAET. Residues 246 to 252 form a beta stranded membrane-spanning segment; sequence YTGGLKY. Over 253 to 256 the chain is Periplasmic; that stretch reads DANN. The beta stranded transmembrane segment at 257–264 threads the bilayer; sequence IYLAAQYT. Topologically, residues 265 to 273 are extracellular; the sequence is QTYNATRVG. A beta stranded membrane pass occupies residues 274 to 290; it reads SLGWANKAQNFEAVAQY. Residues 291-295 are Periplasmic-facing; the sequence is QFDFG. The beta stranded transmembrane segment at 296-303 threads the bilayer; that stretch reads LRPSVAYL. The Extracellular portion of the chain corresponds to 304-326; sequence QSKGKNLGTIGTRNYDDEDILKY. A beta stranded membrane pass occupies residues 327 to 334; the sequence is VDVGATYY. The Periplasmic segment spans residues 335 to 338; it reads FNKN. A beta stranded transmembrane segment spans residues 339-346; the sequence is MSTYVDYK. The Extracellular portion of the chain corresponds to 347-366; the sequence is INLLDDNQFTRDAGINTDNI. A beta stranded membrane pass occupies residues 367–374; it reads VALGLVYQ. Phe375 is a topological domain (periplasmic).

The protein belongs to the Gram-negative porin family. As to quaternary structure, homotrimer. Forms mixed heterotrimers with OmpF; other mixed heterotrimers are also probable.

The protein localises to the cell outer membrane. Forms pores that allow passive diffusion of small molecules across the outer membrane. In terms of biological role, (Microbial infection) Supports colicin E5 entry in the absence of its major receptor OmpF. Its function is as follows. (Microbial infection) A mixed OmpC-OmpF heterotrimer is the outer membrane receptor for toxin CdiA-EC536. In Escherichia coli O6:K15:H31 (strain 536 / UPEC), this protein is Outer membrane porin C (ompC).